The chain runs to 318 residues: Malate dehydrogenase (318 aa).

Residues 11-17 (GAGGNVG) and aspartate 37 each bind NAD(+). 2 residues coordinate substrate: arginine 86 and arginine 92. NAD(+) is bound by residues asparagine 99 and 122-124 (VTN). Residues asparagine 124 and arginine 155 each contribute to the substrate site. Residue histidine 179 is the Proton acceptor of the active site.

This sequence belongs to the LDH/MDH superfamily. MDH type 3 family.

It catalyses the reaction (S)-malate + NAD(+) = oxaloacetate + NADH + H(+). In terms of biological role, catalyzes the reversible oxidation of malate to oxaloacetate. This is Malate dehydrogenase from Nitratiruptor sp. (strain SB155-2).